Here is a 197-residue protein sequence, read N- to C-terminus: Recombination protein RecR (197 aa).

Residues 56-71 (CQQCRTLTEQALCNIC) form a C4-type zinc finger. The region spanning 79-174 (KELCIVETPA…KVSRIAHGIP (96 aa)) is the Toprim domain.

The protein belongs to the RecR family.

In terms of biological role, may play a role in DNA repair. It seems to be involved in an RecBC-independent recombinational process of DNA repair. It may act with RecF and RecO. The protein is Recombination protein RecR of Saccharophagus degradans (strain 2-40 / ATCC 43961 / DSM 17024).